The sequence spans 360 residues: Nucleoporin SEH1 (360 aa).

WD repeat units follow at residues 10–49 (DHKD…DWHC), 55–96 (THSG…SNDK), 111–152 (DSRT…NLSQ), 160–210 (SCKL…RKYA), 217–258 (TVTD…KELT), and 276–315 (NHNS…NWKC). Residue Lys-12 forms a Glycyl lysine isopeptide (Lys-Gly) (interchain with G-Cter in SUMO2) linkage. Residues Ser-179 and Ser-190 each carry the phosphoserine modification. Polar residues predominate over residues 324 to 354 (SPVNGSSQQGTSNPSLGSNIPSLQNSLNGSS). Positions 324 to 360 (SPVNGSSQQGTSNPSLGSNIPSLQNSLNGSSAGRKHS) are disordered.

The protein belongs to the WD repeat SEC13 family. As to quaternary structure, component of the Nup107-160 subcomplex of the nuclear pore complex (NPC). The Nup107-160 subcomplex includes NUP160, NUP133, NUP107, NUP98, NUP85, NUP43, NUP37, SEH1 and SEC13. The SEH1 subunit appears to be only weakly associated with the Nup107-160 subcomplex. Component of the GATOR2 subcomplex, composed of MIOS, SEC13, SEH1L, WDR24 and WDR59. The GATOR2 complex interacts with CASTOR1 and CASTOR2; the interaction is negatively regulated by arginine. The GATOR2 complex interacts with SESN1, SESN2 and SESN3; the interaction is negatively regulated by amino acids. SESN1, SESN2 and SESN3 convey leucine availability via direct interaction with SEH1L and WDR24.

It is found in the chromosome. Its subcellular location is the centromere. It localises to the kinetochore. The protein localises to the nucleus. The protein resides in the nuclear pore complex. It is found in the lysosome membrane. Its activity is regulated as follows. The GATOR2 complex is negatively regulated by the upstream amino acid sensors CASTOR1 and SESN2, which sequester the GATOR2 complex in absence of amino acids. In the presence of abundant amino acids, GATOR2 is released from CASTOR1 and SESN2 and activated. Component of the Nup107-160 subcomplex of the nuclear pore complex (NPC). The Nup107-160 subcomplex is required for the assembly of a functional NPC. The Nup107-160 subcomplex is also required for normal kinetochore microtubule attachment, mitotic progression and chromosome segregation. This subunit plays a role in recruitment of the Nup107-160 subcomplex to the kinetochore. Functionally, as a component of the GATOR2 complex, functions as an activator of the amino acid-sensing branch of the mTORC1 signaling pathway. The GATOR2 complex indirectly activates mTORC1 through the inhibition of the GATOR1 subcomplex. GATOR2 probably acts as an E3 ubiquitin-protein ligase toward GATOR1. In the presence of abundant amino acids, the GATOR2 complex mediates ubiquitination of the NPRL2 core component of the GATOR1 complex, leading to GATOR1 inactivation. In the absence of amino acids, GATOR2 is inhibited, activating the GATOR1 complex. Within the GATOR2 complex, SEC13 and SEH1L are required to stabilize the complex. The polypeptide is Nucleoporin SEH1 (SEH1L) (Pongo abelii (Sumatran orangutan)).